Consider the following 517-residue polypeptide: Probable G-protein coupled receptor Mth-like 4 (517 aa).

Residues methionine 1 to alanine 18 form the signal peptide. At glutamate 19 to lysine 212 the chain is on the extracellular side. Disulfide bonds link cysteine 23/cysteine 77, cysteine 79/cysteine 84, cysteine 88/cysteine 183, cysteine 89/cysteine 100, and cysteine 145/cysteine 201. N-linked (GlcNAc...) asparagine glycosylation occurs at asparagine 39. Residues asparagine 117 and asparagine 165 are each glycosylated (N-linked (GlcNAc...) asparagine). The helical transmembrane segment at threonine 213–valine 233 threads the bilayer. Residues glutamate 234–lysine 242 are Cytoplasmic-facing. Residues cysteine 243–tryptophan 263 traverse the membrane as a helical segment. At lysine 264–threonine 272 the chain is on the extracellular side. A helical transmembrane segment spans residues alanine 273–isoleucine 293. Residues histidine 294 to asparagine 319 lie on the Cytoplasmic side of the membrane. Residues leucine 320–valine 340 traverse the membrane as a helical segment. Residues lysine 341–threonine 363 are Extracellular-facing. Residues valine 364 to valine 384 form a helical membrane-spanning segment. Over leucine 385–glutamine 414 the chain is Cytoplasmic. Residues methionine 415–leucine 435 traverse the membrane as a helical segment. Residues serine 436–glutamine 459 are Extracellular-facing. Residue asparagine 456 is glycosylated (N-linked (GlcNAc...) asparagine). Residues glycine 460–glycine 480 traverse the membrane as a helical segment. At glycine 481 to cysteine 517 the chain is on the cytoplasmic side.

Belongs to the G-protein coupled receptor 2 family. Mth subfamily.

It localises to the cell membrane. This Drosophila melanogaster (Fruit fly) protein is Probable G-protein coupled receptor Mth-like 4 (mthl4).